We begin with the raw amino-acid sequence, 115 residues long: Protein translation factor SUI1 homolog (115 aa).

Belongs to the SUI1 family. As to expression, expressed in all tissues examined.

Its function is as follows. Probably involved in translation. The protein is Protein translation factor SUI1 homolog (GOS2) of Oryza sativa subsp. indica (Rice).